Reading from the N-terminus, the 107-residue chain is Thiosulfate sulfurtransferase GlpE (107 aa).

A Rhodanese domain is found at 17 to 105 (RQGEAVLVDI…WLKAFPLETE (89 aa)). The active-site Cysteine persulfide intermediate is the Cys-65.

Belongs to the GlpE family.

Its subcellular location is the cytoplasm. It carries out the reaction thiosulfate + hydrogen cyanide = thiocyanate + sulfite + 2 H(+). The catalysed reaction is thiosulfate + [thioredoxin]-dithiol = [thioredoxin]-disulfide + hydrogen sulfide + sulfite + 2 H(+). In terms of biological role, transferase that catalyzes the transfer of sulfur from thiosulfate to thiophilic acceptors such as cyanide or dithiols. May function in a CysM-independent thiosulfate assimilation pathway by catalyzing the conversion of thiosulfate to sulfite, which can then be used for L-cysteine biosynthesis. The sequence is that of Thiosulfate sulfurtransferase GlpE from Sodalis glossinidius (strain morsitans).